Reading from the N-terminus, the 549-residue chain is DNA mismatch repair protein MutL (549 aa).

The protein belongs to the DNA mismatch repair MutL/HexB family.

In terms of biological role, this protein is involved in the repair of mismatches in DNA. It is required for dam-dependent methyl-directed DNA mismatch repair. May act as a 'molecular matchmaker', a protein that promotes the formation of a stable complex between two or more DNA-binding proteins in an ATP-dependent manner without itself being part of a final effector complex. The chain is DNA mismatch repair protein MutL from Pseudothermotoga lettingae (strain ATCC BAA-301 / DSM 14385 / NBRC 107922 / TMO) (Thermotoga lettingae).